We begin with the raw amino-acid sequence, 350 residues long: WUSCHEL-related homeobox 1 (350 aa).

A DNA-binding region (homeobox; WUS-type) is located at residues 72 to 136 (MVSSRWNPTP…NHKARERQKR (65 aa)). The interval 283 to 308 (TNTETCHRNGDDNKDQEQHEDCSNGE) is disordered.

This sequence belongs to the WUS homeobox family.

The protein resides in the nucleus. Transcription factor which may be involved in developmental processes. The chain is WUSCHEL-related homeobox 1 (WOX1) from Arabidopsis thaliana (Mouse-ear cress).